Consider the following 274-residue polypeptide: Prothoracicostatic peptide (274 aa).

The N-terminal stretch at 1 to 19 (MRWCLFALWVFGVATVVTA) is a signal peptide. The propeptide occupies 20-67 (AEEPHHDAAPQTDNEVDLTEDDKRAWSSLHSGWAKRAWQDMSSAWGKR). Tryptophan amide is present on W76. A propeptide spanning residues 77–91 (GKRGWQDLNSAWGKR) is cleaved from the precursor. W100 carries the tryptophan amide modification. Residues 101 to 136 (GKRGWQDLNSAWGKRDDDEAMEKKSWQDLNSVWGKR) constitute a propeptide that is removed on maturation. Tryptophan amide is present on W145. The propeptide occupies 146-148 (GKR). W157 carries the post-translational modification Tryptophan amide. The propeptide occupies 158–172 (GKRGWNDISSVWGKR). A Tryptophan amide modification is found at W181. Residues 182 to 274 (GKRAWQDMSS…NEHSATTNEA (93 aa)) constitute a propeptide that is removed on maturation.

The protein localises to the secreted. Inhibits ecdysteroid biosynthesis in the prothoracic gland of fifth instar larvae, with maximum inhibition during the spinning stage. When administered to day 8 fifth instar larvae it produces a significant delay in the commencement spinning behavior. This is Prothoracicostatic peptide from Bombyx mori (Silk moth).